The chain runs to 993 residues: DNA-binding protein SMUBP-2 (993 aa).

A2 carries the N-acetylalanine modification. ATP contacts are provided by residues 214-221 (GPPGTGKT), Q403, Y442, and E571. An SS DNA-binding region spans residues 638-785 (TAFEYLDDIV…KRRFITVSKR (148 aa)). 3 disordered regions span residues 651–723 (YSHE…VESQ), 782–828 (VSKR…PDQP), and 841–879 (VRSA…DLPT). Composition is skewed to polar residues over residues 653 to 662 (HENSQGSSHA) and 669 to 681 (PATS…QRQE). The 64-residue stretch at 723-786 (QDGVDHFRAM…RRFITVSKRA (64 aa)) folds into the R3H domain. Residues 818-828 (PPREQRGPDQP) are compositionally biased toward basic and acidic residues. Positions 842-859 (RSAQGQPASKEQQASGQQ) are enriched in polar residues. The Nuclear localization signal motif lies at 864–868 (KKKKK). An AN1-type zinc finger spans residues 891-940 (VKADNTCGFAKCTAGVTTLGQFCQLCSRRYCLSHHLPEIHGCGERARAHA). Zn(2+)-binding residues include C897, C902, C913, C916, C921, H924, H930, and C932. Residues 971–993 (RRLDKKLSELSNQRTSRRKERGT) form a disordered region.

The protein belongs to the DNA2/NAM7 helicase family. As to quaternary structure, homooligomer. Interacts with RUVBL1. Interacts with RUVBL2. Interacts with GTF3C1. Interacts with ABT1. Interacts with ribosomes. As to expression, expressed in all tissues examined. Expressed in the developing and adult human brain, with highest expression in the cerebellum. Moderately expressed in fibroblasts.

The protein resides in the nucleus. It localises to the cytoplasm. Its subcellular location is the cell projection. It is found in the axon. It catalyses the reaction ATP + H2O = ADP + phosphate + H(+). 5' to 3' helicase that unwinds RNA and DNA duplexes in an ATP-dependent reaction. Specific to 5'-phosphorylated single-stranded guanine-rich sequences. May play a role in RNA metabolism, ribosome biogenesis or initiation of translation. May play a role in regulation of transcription. Interacts with tRNA-Tyr. The polypeptide is DNA-binding protein SMUBP-2 (IGHMBP2) (Homo sapiens (Human)).